A 209-amino-acid polypeptide reads, in one-letter code: Peroxynitrite isomerase 2 (209 aa).

Residues 56–62 (GVWRGEG) carry the GXWXGXG motif. Positions 172 and 199 each coordinate heme b.

The protein belongs to the nitrobindin family. Homodimer. Requires heme b as cofactor.

The catalysed reaction is peroxynitrite = nitrate. It participates in nitrogen metabolism. Heme-binding protein able to scavenge peroxynitrite and to protect free L-tyrosine against peroxynitrite-mediated nitration, by acting as a peroxynitrite isomerase that converts peroxynitrite to nitrate. Therefore, this protein likely plays a role in peroxynitrite sensing and in the detoxification of reactive nitrogen and oxygen species (RNS and ROS, respectively). Is able to bind nitric oxide (NO) in vitro, but may act as a sensor of peroxynitrite levels in vivo. The protein is Peroxynitrite isomerase 2 of Mycolicibacterium gilvum (strain PYR-GCK) (Mycobacterium gilvum (strain PYR-GCK)).